Reading from the N-terminus, the 443-residue chain is Serine/threonine-protein phosphatase 2A 55 kDa regulatory subunit B beta isoform (443 aa).

WD repeat units lie at residues 22 to 61, 87 to 128, 171 to 209, 220 to 260, 279 to 317, 334 to 375, and 410 to 443; these read TEAD…KNQP, EIEE…KRPE, AHTY…RSFN, ELTE…LCDR, EIIS…RPIE, ENDC…DVTL, and DFSK…DKVN.

This sequence belongs to the phosphatase 2A regulatory subunit B family. In terms of assembly, PP2A consists of a common heterodimeric core enzyme, composed of a 36 kDa catalytic subunit (subunit C) and a 65 kDa constant regulatory subunit (PR65 or subunit A), that associates with a variety of regulatory subunits.

The protein resides in the cytoplasm. The protein localises to the cytoskeleton. Its subcellular location is the membrane. Functionally, the B regulatory subunit might modulate substrate selectivity and catalytic activity, and might also direct the localization of the catalytic enzyme to a particular subcellular compartment. Negatively controls the initiation of oocyte maturation. This chain is Serine/threonine-protein phosphatase 2A 55 kDa regulatory subunit B beta isoform (ppp2r2b), found in Xenopus tropicalis (Western clawed frog).